The chain runs to 850 residues: Envelope glycoprotein gp160 (850 aa).

The first 31 residues, 1 to 31 (MRVREMQRNWQHLGRWGLLFLGILIICSAAD), serve as a signal peptide directing secretion. At 32–678 (KLWVTVYYGV…ITRWLWYIEI (647 aa)) the chain is on the extracellular side. Cysteines 53 and 73 form a disulfide. N-linked (GlcNAc...) asparagine; by host glycosylation is found at Asn-87, Asn-129, Asn-136, Asn-141, Asn-142, Asn-148, Asn-157, Asn-161, Asn-186, Asn-189, Asn-198, Asn-231, Asn-235, Asn-242, Asn-263, Asn-277, Asn-296, Asn-302, Asn-332, and Asn-354. 5 cysteine pairs are disulfide-bonded: Cys-118-Cys-206, Cys-125-Cys-197, Cys-130-Cys-158, Cys-219-Cys-248, and Cys-229-Cys-240. The V1 stretch occupies residues 130 to 157 (CTKAIINVTSSNNTTLAPNVTISEEMKN). A V2 region spans residues 158–197 (CSFNITTEIRDKQKKEYALFYKLDVVQINNSNTSYRLINC). The tract at residues 297–330 (CTRPNNNTRRSIHIGPGRAFYATGEIIGDTRKAH) is V3. Cys-297 and Cys-331 form a disulfide bridge. The tract at residues 362–372 (SAGGDLEITTH) is CD4-binding loop. 2 disulfide bridges follow: Cys-376–Cys-440 and Cys-383–Cys-413. The tract at residues 383-413 (CNTTILFNHTRVNDILSNNHTRENDTITLPC) is V4. 6 N-linked (GlcNAc...) asparagine; by host glycosylation sites follow: Asn-384, Asn-390, Asn-401, Asn-406, Asn-443, and Asn-457. V5 stretches follow at residues 456-465 (GNESETLRPG) and 458-465 (ESETLRPG). Residues 506-526 (AVGMGAMFLGFLGAAGSTMGA) are fusion peptide. The tract at residues 568-586 (KQLQARILAVERYLKDQQL) is immunosuppression. Cys-592 and Cys-598 are joined by a disulfide. N-linked (GlcNAc...) asparagine; by host glycosylation is found at Asn-605, Asn-610, Asn-619, and Asn-631. The stretch at 627 to 661 (KEIGNYTDTIYRLIESAQNQQEKNEQDLLALDKWD) forms a coiled coil. The interval 656-677 (ALDKWDNLWNWFSITRWLWYIE) is MPER; binding to GalCer. Residues 679-699 (FIMIIGSLIGLRIVFTVLSII) traverse the membrane as a helical segment. Topologically, residues 700 to 850 (NRVRQGYSPL…IRQGLERALL (151 aa)) are cytoplasmic. The YXXL motif; contains endocytosis signal signature appears at 706-709 (YSPL). The disordered stretch occupies residues 716–736 (PNSRGPERPGGIEEEGGEQDK). The S-palmitoyl cysteine; by host moiety is linked to residue Cys-758. A Di-leucine internalization motif motif is present at residues 849–850 (LL).

This sequence belongs to the HIV-1 env protein family. The mature envelope protein (Env) consists of a homotrimer of non-covalently associated gp120-gp41 heterodimers. The resulting complex protrudes from the virus surface as a spike. There seems to be as few as 10 spikes on the average virion. Interacts with host CD4, CCR5 and CXCR4. Gp120 also interacts with the C-type lectins CD209/DC-SIGN and CLEC4M/DC-SIGNR (collectively referred to as DC-SIGN(R)). Gp120 and gp41 interact with GalCer. Gp120 interacts with host ITGA4/ITGB7 complex; on CD4+ T-cells, this interaction results in rapid activation of integrin ITGAL/LFA-1, which facilitates efficient cell-to-cell spreading of HIV-1. Gp120 interacts with cell-associated heparan sulfate; this interaction increases virus infectivity on permissive cells and may be involved in infection of CD4- cells. In terms of assembly, the mature envelope protein (Env) consists of a homotrimer of non-covalently associated gp120-gp41 heterodimers. The resulting complex protrudes from the virus surface as a spike. There seems to be as few as 10 spikes on the average virion. Post-translationally, highly glycosylated by host. The high number of glycan on the protein is reffered to as 'glycan shield' because it contributes to hide protein sequence from adaptive immune system. Palmitoylation of the transmembrane protein and of Env polyprotein (prior to its proteolytic cleavage) is essential for their association with host cell membrane lipid rafts. Palmitoylation is therefore required for envelope trafficking to classical lipid rafts, but not for viral replication. In terms of processing, specific enzymatic cleavages in vivo yield mature proteins. Envelope glycoproteins are synthesized as an inactive precursor that is heavily N-glycosylated and processed likely by host cell furin in the Golgi to yield the mature SU and TM proteins. The cleavage site between SU and TM requires the minimal sequence [KR]-X-[KR]-R. About 2 of the 9 disulfide bonds of gp41 are reduced by P4HB/PDI, following binding to CD4 receptor.

It is found in the virion membrane. Its subcellular location is the host cell membrane. The protein resides in the host endosome membrane. Its function is as follows. Oligomerizes in the host endoplasmic reticulum into predominantly trimers. In a second time, gp160 transits in the host Golgi, where glycosylation is completed. The precursor is then proteolytically cleaved in the trans-Golgi and thereby activated by cellular furin or furin-like proteases to produce gp120 and gp41. Attaches the virus to the host lymphoid cell by binding to the primary receptor CD4. This interaction induces a structural rearrangement creating a high affinity binding site for a chemokine coreceptor like CXCR4 and/or CCR5. Acts as a ligand for CD209/DC-SIGN and CLEC4M/DC-SIGNR, which are respectively found on dendritic cells (DCs), and on endothelial cells of liver sinusoids and lymph node sinuses. These interactions allow capture of viral particles at mucosal surfaces by these cells and subsequent transmission to permissive cells. HIV subverts the migration properties of dendritic cells to gain access to CD4+ T-cells in lymph nodes. Virus transmission to permissive T-cells occurs either in trans (without DCs infection, through viral capture and transmission), or in cis (following DCs productive infection, through the usual CD4-gp120 interaction), thereby inducing a robust infection. In trans infection, bound virions remain infectious over days and it is proposed that they are not degraded, but protected in non-lysosomal acidic organelles within the DCs close to the cell membrane thus contributing to the viral infectious potential during DCs' migration from the periphery to the lymphoid tissues. On arrival at lymphoid tissues, intact virions recycle back to DCs' cell surface allowing virus transmission to CD4+ T-cells. In terms of biological role, acts as a class I viral fusion protein. Under the current model, the protein has at least 3 conformational states: pre-fusion native state, pre-hairpin intermediate state, and post-fusion hairpin state. During fusion of viral and target intracellular membranes, the coiled coil regions (heptad repeats) assume a trimer-of-hairpins structure, positioning the fusion peptide in close proximity to the C-terminal region of the ectodomain. The formation of this structure appears to drive apposition and subsequent fusion of viral and target cell membranes. Complete fusion occurs in host cell endosomes and is dynamin-dependent, however some lipid transfer might occur at the plasma membrane. The virus undergoes clathrin-dependent internalization long before endosomal fusion, thus minimizing the surface exposure of conserved viral epitopes during fusion and reducing the efficacy of inhibitors targeting these epitopes. Membranes fusion leads to delivery of the nucleocapsid into the cytoplasm. This chain is Envelope glycoprotein gp160, found in Human immunodeficiency virus type 1 group M subtype F2 (isolate MP257) (HIV-1).